The chain runs to 153 residues: MLRLRSGLRHLRATPNTRGSARLLCAEMPKKAGATTKGKSQSKEPERPLPPLGPVAVDPKGCVTIAIHAKPGSKQNAVTDLTAEAVNVAIAAPPSEGEANAELCRYLSKVLELRKSDVVLDKGGKSREKVVKLLASTTPEEILEKLKKEAKKT.

Basic residues predominate over residues 1–12; the sequence is MLRLRSGLRHLR. Residues 1-55 are disordered; that stretch reads MLRLRSGLRHLRATPNTRGSARLLCAEMPKKAGATTKGKSQSKEPERPLPPLGPV. S116 bears the Phosphoserine mark.

It belongs to the UPF0235 family.

This chain is UPF0235 protein C15orf40 (C15orf40), found in Homo sapiens (Human).